A 392-amino-acid chain; its full sequence is Phosphoglycerate kinase (392 aa).

Substrate-binding positions include Asp21–Asn23, Arg36, His59–Arg62, Arg117, and Arg150. Residues Lys200, Gly288, Glu319, and Gly345–Ser348 contribute to the ATP site.

The protein belongs to the phosphoglycerate kinase family. As to quaternary structure, monomer.

Its subcellular location is the cytoplasm. The enzyme catalyses (2R)-3-phosphoglycerate + ATP = (2R)-3-phospho-glyceroyl phosphate + ADP. It functions in the pathway carbohydrate degradation; glycolysis; pyruvate from D-glyceraldehyde 3-phosphate: step 2/5. This Rubrobacter xylanophilus (strain DSM 9941 / JCM 11954 / NBRC 16129 / PRD-1) protein is Phosphoglycerate kinase.